The following is a 432-amino-acid chain: Short/branched chain specific acyl-CoA dehydrogenase, mitochondrial (432 aa).

Residues 1 to 33 (MEGLAVRLLRGSRLLRRNFPTCLSSWKIPPHVS) constitute a mitochondrion transit peptide. At Lys-70 the chain carries N6-acetyllysine; alternate. Residue Lys-70 is modified to N6-succinyllysine; alternate. Residues 174–183 (FCLSEAGAGS) and 207–209 (WIS) each bind FAD. Ser-183 provides a ligand contact to substrate. Ser-183 carries the phosphoserine modification. Residues Tyr-229 and Tyr-283 each contribute to the substrate site. An N6-acetyllysine; alternate modification is found at Lys-284. Lys-284 carries the N6-succinyllysine; alternate modification. 291–294 (NEGR) serves as a coordination point for substrate. Residues Arg-319, Gln-330, and 387-391 (EWMGG) contribute to the FAD site. Glu-414 serves as the catalytic Proton acceptor. An FAD-binding site is contributed by 416 to 418 (ASN). N6-acetyllysine is present on Lys-426.

The protein belongs to the acyl-CoA dehydrogenase family. As to quaternary structure, homotetramer. Requires FAD as cofactor.

It localises to the mitochondrion matrix. It carries out the reaction 2-methylbutanoyl-CoA + oxidized [electron-transfer flavoprotein] + H(+) = (2E)-2-methylbut-2-enoyl-CoA + reduced [electron-transfer flavoprotein]. The catalysed reaction is (2S)-2-methylbutanoyl-CoA + oxidized [electron-transfer flavoprotein] + H(+) = (2E)-2-methylbut-2-enoyl-CoA + reduced [electron-transfer flavoprotein]. It catalyses the reaction (2R)-2-methylbutanoyl-CoA + oxidized [electron-transfer flavoprotein] + H(+) = ethylacryloyl-CoA + reduced [electron-transfer flavoprotein]. The enzyme catalyses butanoyl-CoA + oxidized [electron-transfer flavoprotein] + H(+) = (2E)-butenoyl-CoA + reduced [electron-transfer flavoprotein]. It carries out the reaction 2-methylpropanoyl-CoA + oxidized [electron-transfer flavoprotein] + H(+) = 2-methylpropenoyl-CoA + reduced [electron-transfer flavoprotein]. The catalysed reaction is hexanoyl-CoA + oxidized [electron-transfer flavoprotein] + H(+) = (2E)-hexenoyl-CoA + reduced [electron-transfer flavoprotein]. It catalyses the reaction valproyl-CoA + oxidized [electron-transfer flavoprotein] + H(+) = (2E)-2-propylpent-2-enoyl-CoA + reduced [electron-transfer flavoprotein]. Its pathway is lipid metabolism; mitochondrial fatty acid beta-oxidation. The protein operates within amino-acid degradation; L-isoleucine degradation. Functionally, short and branched chain specific acyl-CoA dehydrogenase that catalyzes the removal of one hydrogen from C-2 and C-3 of the fatty acyl-CoA thioester, resulting in the formation of trans-2-enoyl-CoA. Among the different mitochondrial acyl-CoA dehydrogenases, acts specifically on short and branched chain acyl-CoA derivatives such as (S)-2-methylbutyryl-CoA as well as short straight chain acyl-CoAs such as butyryl-CoA. Plays an important role in the metabolism of L-isoleucine by catalyzing the dehydrogenation of 2-methylbutyryl-CoA, one of the steps of the L-isoleucine catabolic pathway. Can also act on valproyl-CoA, a metabolite of the valproic acid drug. This is Short/branched chain specific acyl-CoA dehydrogenase, mitochondrial (ACADSB) from Pongo abelii (Sumatran orangutan).